The chain runs to 96 residues: Small ribosomal subunit protein bS6 (96 aa).

Belongs to the bacterial ribosomal protein bS6 family.

Its function is as follows. Binds together with bS18 to 16S ribosomal RNA. The polypeptide is Small ribosomal subunit protein bS6 (Bacillus cereus (strain G9842)).